The following is a 40-amino-acid chain: uncharacterized protein (40 aa).

Residues 20-37 traverse the membrane as a helical segment; the sequence is TYLYWTAVTAAYLTYLTI.

It is found in the membrane. This is an uncharacterized protein from Archaeoglobus fulgidus (strain ATCC 49558 / DSM 4304 / JCM 9628 / NBRC 100126 / VC-16).